The sequence spans 139 residues: Arsenate reductase (139 aa).

Active-site nucleophile residues include Cys10, Cys82, and Cys89. Intrachain disulfides connect Cys10–Cys82 and Cys82–Cys89.

The protein belongs to the low molecular weight phosphotyrosine protein phosphatase family. Thioredoxin-coupled ArsC subfamily.

It localises to the cytoplasm. It catalyses the reaction arsenate + [thioredoxin]-dithiol + H(+) = arsenite + [thioredoxin]-disulfide + H2O. Catalyzes the reduction of arsenate [As(V)] to arsenite [As(III)]. This Oceanobacillus iheyensis (strain DSM 14371 / CIP 107618 / JCM 11309 / KCTC 3954 / HTE831) protein is Arsenate reductase.